Consider the following 154-residue polypeptide: Ribonuclease H (154 aa).

The RNase H type-1 domain occupies 1–142 (MTPKLVIYTD…ADELARLGML (142 aa)). Positions 10, 48, 70, and 134 each coordinate Mg(2+).

It belongs to the RNase H family. In terms of assembly, monomer. Mg(2+) serves as cofactor.

Its subcellular location is the cytoplasm. It carries out the reaction Endonucleolytic cleavage to 5'-phosphomonoester.. In terms of biological role, endonuclease that specifically degrades the RNA of RNA-DNA hybrids. The polypeptide is Ribonuclease H (Caulobacter sp. (strain K31)).